An 880-amino-acid polypeptide reads, in one-letter code: Leucine--tRNA ligase (880 aa).

The short motif at 46–56 is the 'HIGH' region element; the sequence is PYPSGALHMGH. The 'KMSKS' region motif lies at 638-642; that stretch reads KMSKS. K641 provides a ligand contact to ATP.

The protein belongs to the class-I aminoacyl-tRNA synthetase family.

Its subcellular location is the cytoplasm. The enzyme catalyses tRNA(Leu) + L-leucine + ATP = L-leucyl-tRNA(Leu) + AMP + diphosphate. In Stenotrophomonas maltophilia (strain K279a), this protein is Leucine--tRNA ligase.